Here is a 258-residue protein sequence, read N- to C-terminus: Lipoprotein-releasing system ATP-binding protein LolD (258 aa).

One can recognise an ABC transporter domain in the interval 5-244; it reads LQCCQLSKSY…PTSSITDPAN (240 aa). 41 to 48 is a binding site for ATP; it reads GSSGCGKS. The disordered stretch occupies residues 222–258; sequence LRPLSDNSEQALPPTSSITDPANNIKDNEPQANERHV. Polar residues predominate over residues 226 to 243; that stretch reads SDNSEQALPPTSSITDPA. The span at 247–258 shows a compositional bias: basic and acidic residues; sequence KDNEPQANERHV.

This sequence belongs to the ABC transporter superfamily. Lipoprotein translocase (TC 3.A.1.125) family. The complex is composed of two ATP-binding proteins (LolD) and two transmembrane proteins (LolC and LolE).

The protein localises to the cell inner membrane. Functionally, part of the ABC transporter complex LolCDE involved in the translocation of mature outer membrane-directed lipoproteins, from the inner membrane to the periplasmic chaperone, LolA. Responsible for the formation of the LolA-lipoprotein complex in an ATP-dependent manner. This Colwellia psychrerythraea (strain 34H / ATCC BAA-681) (Vibrio psychroerythus) protein is Lipoprotein-releasing system ATP-binding protein LolD.